Here is a 247-residue protein sequence, read N- to C-terminus: TLC domain-containing protein 1 (247 aa).

The signal sequence occupies residues 1-27 (MPLLFHPAWPLLLGATLTFRALRRVLC). Residues 28 to 46 (RLPQPAHVQTDPLRTWRWH) lie on the Extracellular side of the membrane. Residues 40–234 (LRTWRWHNLL…LLRSDFCPER (195 aa)) form the TLC domain. A helical transmembrane segment spans residues 47–67 (NLLVSFTHSIVSGIWALLCLW). Residues 68-83 (QTPEMLVEIETAWSAS) are Cytoplasmic-facing. The chain crosses the membrane as a helical span at residues 84–104 (GYLLVCFSAGYFIHDTVDIVV). Over 105–123 (SKQTRASWEYLVHHVMAMG) the chain is Extracellular. An intramembrane region (helical) is located at residues 124-144 (AFFSGIFWKRFVGGGVLTLLV). Residues 145 to 173 (EVSNIFLTLRMMMKINNAQDLLLYKVNKY) lie on the Extracellular side of the membrane. The helical transmembrane segment at 174–194 (INLVMYFLFRLAPQAYLTKFF) threads the bilayer. Residues 195–201 (LQYAGQR) lie on the Cytoplasmic side of the membrane. A helical transmembrane segment spans residues 202 to 222 (TLGTFLLAILLMLDLMIIIYF). Topologically, residues 223–247 (SRLLRSDFCPERAPRRQQKDKFLTE) are extracellular.

It localises to the cell membrane. In terms of biological role, regulates the composition and fluidity of the plasma membrane. Inhibits the incorporation of membrane-fluidizing phospholipids containing omega-3 long-chain polyunsaturated fatty acids (LCPUFA) and thereby promotes membrane rigidity. Does not appear to have any effect on LCPUFA synthesis. The sequence is that of TLC domain-containing protein 1 (Tlcd1) from Mus musculus (Mouse).